A 252-amino-acid chain; its full sequence is Proteasome subunit alpha type-3 (252 aa).

It belongs to the peptidase T1A family. In terms of assembly, the 26S proteasome consists of a 20S proteasome core and two 19S regulatory subunits. The 20S proteasome core is composed of 28 subunits that are arranged in four stacked rings, resulting in a barrel-shaped structure. The two end rings are each formed by seven alpha subunits, and the two central rings are each formed by seven beta subunits. The catalytic chamber with the active sites is on the inside of the barrel.

The protein resides in the cytoplasm. The protein localises to the nucleus. In terms of biological role, the proteasome is a multicatalytic proteinase complex which is characterized by its ability to cleave peptides with Arg, Phe, Tyr, Leu, and Glu adjacent to the leaving group at neutral or slightly basic pH. The proteasome has an ATP-dependent proteolytic activity. The polypeptide is Proteasome subunit alpha type-3 (Acanthamoeba castellanii (Amoeba)).